The following is a 199-amino-acid chain: Probable chemoreceptor glutamine deamidase CheD (199 aa).

The protein belongs to the CheD family.

The enzyme catalyses L-glutaminyl-[protein] + H2O = L-glutamyl-[protein] + NH4(+). Its function is as follows. Probably deamidates glutamine residues to glutamate on methyl-accepting chemotaxis receptors (MCPs), playing an important role in chemotaxis. The chain is Probable chemoreceptor glutamine deamidase CheD from Cereibacter sphaeroides (strain ATCC 17025 / ATH 2.4.3) (Rhodobacter sphaeroides).